The chain runs to 453 residues: Prenyltransferase nscD (453 aa).

Dimethylallyl diphosphate-binding residues include Arg118, Lys200, Tyr202, Lys271, Tyr273, and Tyr428.

It belongs to the tryptophan dimethylallyltransferase family.

It functions in the pathway secondary metabolite biosynthesis. Functionally, prenyltransferase; part of the gene cluster that mediates the biosynthesis of neosartoricin, a prenylated anthracenone that exhibits T-cell antiproliferative activity, suggestive of a physiological role as an immunosuppressive agent. The non-reducing polyketide synthase nscA probably synthesizes and cyclizes the decaketide backbone. The hydrolase nscB then mediates the product release through hydrolysis followed by spontaneous decarboxylation. The prenyltransferase nscD catalyzes the addition of the dimethylallyl group to the aromatic C5. The FAD-dependent monooxygenase nscC is then responsible for the stereospecific hydroxylation at C2. There is no gene encoding O-acetyltransferase in the nsc gene cluster; thus, the last step of 2-O-acetylation leading to neosartoricin may be catalyzed by an unidentified O-acetyltransferase. The sequence is that of Prenyltransferase nscD from Aspergillus fumigatus (strain ATCC MYA-4609 / CBS 101355 / FGSC A1100 / Af293) (Neosartorya fumigata).